The sequence spans 778 residues: Kin of IRRE-like protein 3 (778 aa).

Positions 1–21 (MKPFQLDLLFVCFFLFSQELG) are cleaved as a signal peptide. Residues 22-535 (LQKRGCCLVL…GLEAESVPMA (514 aa)) lie on the Extracellular side of the membrane. Ig-like C2-type domains follow at residues 48–142 (YSFS…ARLT), 147–243 (PDDP…TSVT), 249–330 (PPLV…RTVD), 335–415 (PRMT…VTLT), and 419–515 (PPII…IRLK). C69 and C127 are disulfide-bonded. N-linked (GlcNAc...) asparagine glycosylation occurs at N167. An intrachain disulfide couples C170 to C227. Residue N253 is glycosylated (N-linked (GlcNAc...) asparagine). A disulfide bridge links C271 with C314. Residue N324 is glycosylated (N-linked (GlcNAc...) asparagine). Disulfide bonds link C356–C398 and C440–C499. An N-linked (GlcNAc...) asparagine glycan is attached at N498. A helical transmembrane segment spans residues 536-556 (VIIGVAVGAGVAFLVLMATIV). At 557 to 778 (AFCCARSQRN…PLQRRMQTHV (222 aa)) the chain is on the cytoplasmic side. Polar residues predominate over residues 727–736 (CDSSVSSSGK). The disordered stretch occupies residues 727–778 (CDSSVSSSGKQDGYVQFDKASKASASSSHHSQSSSQNSDPSRPLQRRMQTHV). Residues 748 to 762 (KASASSSHHSQSSSQ) show a composition bias toward low complexity.

It belongs to the immunoglobulin superfamily. Homodimer; mediates homophilic interactions to promote cell adhesion. Interacts with NPHS1; forms heterodimers with NPHS1. Interacts with NPHS2/podocin (via the C-terminus). Interacts with CASK. Interacts (via extracellular region) with MAP1B. Interacts (via extracellular region) with MYO16. Interacts (via intracellular region) with ATP1B1. Interacts (via intracellular region) with SHMT2. Interacts (via intracellular region) with UFC1. Post-translationally, undergoes proteolysis by a metalloprotease and gives rise to a soluble form. Expressed in fetal and adult brain. Also expressed in kidney, specifically in podocytes of kidney glomeruli. Also expressed in skeletal muscle.

The protein resides in the cell membrane. It is found in the secreted. Functionally, synaptic adhesion molecule required for the formation of target-specific synapses. Required for formation of target-specific synapses at hippocampal mossy fiber synapses. Required for formation of mossy fiber filopodia, the synaptic structures connecting dentate granule and GABA neurons. Probably acts as a homophilic adhesion molecule that promotes trans-cellular interactions and stabilize mossy fiber filipodia contact and subsequent synapse formation. Required for the coalescence of vomeronasal sensory neuron axons. May be involved in the hematopoietic supportive capacity of stroma cells; the secreted extracellular domain is directly responsible for supporting hematopoietic stem cells. The chain is Kin of IRRE-like protein 3 from Homo sapiens (Human).